A 543-amino-acid chain; its full sequence is Malate synthase (543 aa).

The active-site Proton acceptor is the Arg162. Asp449 functions as the Proton donor in the catalytic mechanism.

It belongs to the malate synthase family.

The enzyme catalyses glyoxylate + acetyl-CoA + H2O = (S)-malate + CoA + H(+). It participates in carbohydrate metabolism; glyoxylate cycle; (S)-malate from isocitrate: step 2/2. The sequence is that of Malate synthase (masA) from Dictyostelium discoideum (Social amoeba).